The following is a 165-amino-acid chain: Endoribonuclease YbeY (165 aa).

His-130, His-134, and His-140 together coordinate Zn(2+).

Belongs to the endoribonuclease YbeY family. Zn(2+) serves as cofactor.

The protein resides in the cytoplasm. Single strand-specific metallo-endoribonuclease involved in late-stage 70S ribosome quality control and in maturation of the 3' terminus of the 16S rRNA. In Streptococcus pyogenes serotype M1, this protein is Endoribonuclease YbeY.